Here is a 325-residue protein sequence, read N- to C-terminus: MPRPVLLIHGGAGDIPDSRIAGKFKGIKEALRCAWGSLVPASGAKGGALDAVETAVRSMELDENFNAGYGSCLNTDGQVEMEASLMEGQDLRAGCVTLLRDVMHPITVARRLMEKQRHTFIGGEAAQELALSTGSERLPANALVTEGARFTLQQFKEQLTQGKDPFFARTELAAEQKTDPSGETVGAVAMDHNGQIVVGTSTGGITGKWPGRIGDTPILGSGTYADNARGGVSTTGHGETIMRYNLAQRILAAIEHKGMSAQAAADQECREMTRRIGGTGGAIVVGHAGDLGISFTSQRMAWGYIQDDTIFYGIEGQVVHQEPLS.

The active-site Nucleophile is the threonine 184. Residues 212-215 (RIGD) and 235-238 (TGHG) contribute to the substrate site.

This sequence belongs to the Ntn-hydrolase family. In terms of assembly, heterodimer of an alpha and beta chain produced by autocleavage. Cleaved into an alpha and beta chain by autocatalysis; this activates the enzyme. The N-terminal residue of the beta subunit is responsible for the nucleophile hydrolase activity.

It catalyses the reaction L-asparagine + H2O = L-aspartate + NH4(+). It carries out the reaction Cleavage of a beta-linked Asp residue from the N-terminus of a polypeptide.. Has both L-asparaginase and beta-aspartyl peptidase activity. Does not have aspartylglucosaminidase activity and is inactive toward GlcNAc-L-Asn. Likewise, has no activity toward glutamine. This Drosophila pseudoobscura pseudoobscura (Fruit fly) protein is Probable isoaspartyl peptidase/L-asparaginase GA20639.